Here is a 211-residue protein sequence, read N- to C-terminus: Small ribosomal subunit protein eS1 (211 aa).

Belongs to the eukaryotic ribosomal protein eS1 family.

The protein is Small ribosomal subunit protein eS1 of Archaeoglobus fulgidus (strain ATCC 49558 / DSM 4304 / JCM 9628 / NBRC 100126 / VC-16).